The primary structure comprises 344 residues: ATPase GET3 (344 aa).

Position 26–33 (26–33 (KGGVGKTT)) interacts with ATP. Residue Asp57 is part of the active site. 2 residues coordinate ATP: Glu239 and Asn266. Zn(2+)-binding residues include Cys276 and Cys279.

Belongs to the arsA ATPase family. Homodimer. Component of the Golgi to ER traffic (GET) complex, which is composed of GET1, GET2 and GET3. Within the complex, GET1 and GET2 form a heterotetramer which is stabilized by phosphatidylinositol binding and which binds to the GET3 homodimer. Interacts with the chloride channel protein GEF1.

It localises to the cytoplasm. The protein resides in the endoplasmic reticulum. Its subcellular location is the golgi apparatus. In terms of biological role, ATPase required for the post-translational delivery of tail-anchored (TA) proteins to the endoplasmic reticulum. Recognizes and selectively binds the transmembrane domain of TA proteins in the cytosol. This complex then targets to the endoplasmic reticulum by membrane-bound receptors GET1 and GET2, where the tail-anchored protein is released for insertion. This process is regulated by ATP binding and hydrolysis. ATP binding drives the homodimer towards the closed dimer state, facilitating recognition of newly synthesized TA membrane proteins. ATP hydrolysis is required for insertion. Subsequently, the homodimer reverts towards the open dimer state, lowering its affinity for the GET1-GET2 receptor, and returning it to the cytosol to initiate a new round of targeting. Cooperates with the HDEL receptor ERD2 to mediate the ATP-dependent retrieval of resident ER proteins that contain a C-terminal H-D-E-L retention signal from the Golgi to the ER. Involved in low-level resistance to the oxyanions arsenite and arsenate, and in heat tolerance. The chain is ATPase GET3 from Komagataella phaffii (strain GS115 / ATCC 20864) (Yeast).